The chain runs to 380 residues: Methylthioribose-1-phosphate isomerase (380 aa).

Catalysis depends on Asp-257, which acts as the Proton donor.

Belongs to the eIF-2B alpha/beta/delta subunits family. MtnA subfamily.

Its subcellular location is the cytoplasm. The protein localises to the nucleus. The enzyme catalyses 5-(methylsulfanyl)-alpha-D-ribose 1-phosphate = 5-(methylsulfanyl)-D-ribulose 1-phosphate. It functions in the pathway amino-acid biosynthesis; L-methionine biosynthesis via salvage pathway; L-methionine from S-methyl-5-thio-alpha-D-ribose 1-phosphate: step 1/6. In terms of biological role, catalyzes the interconversion of methylthioribose-1-phosphate (MTR-1-P) into methylthioribulose-1-phosphate (MTRu-1-P). The sequence is that of Methylthioribose-1-phosphate isomerase from Naegleria gruberi (Amoeba).